The following is a 170-amino-acid chain: Type IV pilus assembly protein C (170 aa).

Residues Met-1–Ala-23 form the signal peptide. The tract at residues Lys-87 to Ser-107 is disordered. Residues Ala-93–Ser-107 show a composition bias toward polar residues. Residues Arg-109 to Glu-166 are a coiled coil.

Its subcellular location is the periplasm. In terms of biological role, required for stabilizing type IV pilus (T4p) in extended, nonretracted conformation on the bacterial cell surface. This Neisseria gonorrhoeae (strain ATCC 700825 / FA 1090) protein is Type IV pilus assembly protein C.